The following is a 632-amino-acid chain: tRNA uridine 5-carboxymethylaminomethyl modification enzyme MnmG (632 aa).

Residues 15 to 20, Ile-127, and Ser-182 each bind FAD; that span reads GAGHAG. 276–290 lines the NAD(+) pocket; that stretch reads GPRYCPSIEDKIVRF. Gln-373 is an FAD binding site.

It belongs to the MnmG family. Homodimer. Heterotetramer of two MnmE and two MnmG subunits. The cofactor is FAD.

The protein resides in the cytoplasm. Its function is as follows. NAD-binding protein involved in the addition of a carboxymethylaminomethyl (cmnm) group at the wobble position (U34) of certain tRNAs, forming tRNA-cmnm(5)s(2)U34. The polypeptide is tRNA uridine 5-carboxymethylaminomethyl modification enzyme MnmG (Streptococcus pyogenes serotype M6 (strain ATCC BAA-946 / MGAS10394)).